Consider the following 336-residue polypeptide: Potassium channel subfamily K member 1 (336 aa).

Topologically, residues 1–20 (MLQSLAGSSCVRLVERHRSA) are cytoplasmic. Residues 21–41 (RCFGFLVLGYLLYLVFGAVVF) traverse the membrane as a helical segment. The Extracellular segment spans residues 42 to 103 (SSVELPYEDL…SNASGNWNWD (62 aa)). N95 carries N-linked (GlcNAc...) asparagine glycosylation. Positions 104-116 (FTSALFFASTVLS) form an intramembrane region, helical. An intramembrane segment occupies 117-122 (TTGYGH). The selectivity filter 1 stretch occupies residues 117–122 (TTGYGH). At 123–132 (TVPLSDGGKA) the chain is on the extracellular side. Residues 133–156 (FCIIYSVIGIPFTLLFLTAVVQRI) form a helical membrane-spanning segment. Over 157-181 (TVHVTRRPVLYFHIRWGFSKQVVAI) the chain is Cytoplasmic. A helical transmembrane segment spans residues 182–202 (VHAVLLGFVTVSCFFFIPAAV). At 203-211 (FSVLEDDWN) the chain is on the extracellular side. The helical intramembrane region spans 212-224 (FLESFYFCFISLS). The interval 225-230 (TIGLGD) is selectivity filter 2. Residues 225 to 231 (TIGLGDY) lie within the membrane without spanning it. At 232–243 (VPGEGYNQKFRE) the chain is on the extracellular side. The helical transmembrane segment at 244–267 (LYKIGITCYLLLGLIAMLVVLETF) threads the bilayer. Residues 268–336 (CELHELKKFR…SACMDGPANH (69 aa)) are Cytoplasmic-facing. K274 participates in a covalent cross-link: Glycyl lysine isopeptide (Lys-Gly) (interchain with G-Cter in SUMO). Positions 293-299 (IIEHDQL) are important for intracellular retention in recycling endosomes. A disordered region spans residues 315–336 (QKQNEPFVATQSSACMDGPANH). S326 carries the post-translational modification Phosphoserine.

Belongs to the two pore domain potassium channel (TC 1.A.1.8) family. In terms of assembly, homodimer; disulfide-linked. Heterodimer with KCNK2; disulfide-linked. In astrocytes, forms mostly heterodimeric potassium channels with KCNK2, with only a minor proportion of functional channels containing homodimeric KCNK1. Interacts with KCNK3 and KCNK9, forming functional heterodimeric channels. Interacts with GNG4. Identified in a complex with PSD and ARF6; interacts only with PSD that is bound to ARF6. Interacts with UBE2I. In terms of processing, sumoylation is controversial. Sumoylated by UBE2I. Not sumoylated when expressed in xenopus oocytes or mammalian cells. Sumoylation inactivates the channel, but does not interfere with expression at the cell membrane. Sumoylation of a single subunit is sufficient to silence the dimeric channel. Sumoylation of KCNK1 is sufficient to silence heterodimeric channels formed by KCNK1 and KCNK3 or KCNK9. Desumoylated by SENP1; this activates the channel. Desumoylated by SENP1; this strongly increases halothane-mediated activation of heterodimeric channels formed with KCNK9. SENP1 treatment has no effect.

The protein resides in the cell membrane. It is found in the recycling endosome. The protein localises to the synaptic cell membrane. It localises to the cytoplasmic vesicle. Its subcellular location is the perikaryon. The protein resides in the cell projection. It is found in the dendrite. The protein localises to the apical cell membrane. The catalysed reaction is K(+)(in) = K(+)(out). It catalyses the reaction NH4(+)(in) = NH4(+)(out). It carries out the reaction Na(+)(in) = Na(+)(out). The enzyme catalyses Rb(+)(in) = Rb(+)(out). The catalysed reaction is Cs(+)(in) = Cs(+)(out). It catalyses the reaction Li(+)(in) = Li(+)(out). It carries out the reaction L-glutamate(out) = L-glutamate(in). The enzyme catalyses chloride(in) = chloride(out). Functionally, ion channel that contributes to passive transmembrane potassium transport and to the regulation of the resting membrane potential in brain astrocytes, but also in kidney and in other tissues. Forms dimeric channels through which potassium ions pass in accordance with their electrochemical gradient. The channel is selective for K(+) ions at physiological potassium concentrations and at neutral pH, but becomes permeable to Na(+) at subphysiological K(+) levels, and upon acidification of the extracellular medium. The homodimer has very low potassium channel activity, when expressed in heterologous systems, and can function as weakly inward rectifying potassium channel. Channel activity is modulated by activation of serotonin receptors. Heterodimeric channels containing KCNK1 and KCNK2 have much higher activity, and may represent the predominant form in astrocytes. Heterodimeric channels containing KCNK1 and KCNK3 or KCNK9 have much higher activity. Heterodimeric channels formed by KCNK1 and KCNK9 may contribute to halothane-sensitive currents. Mediates outward rectifying potassium currents in dentate gyrus granule cells and contributes to the regulation of their resting membrane potential. Contributes to the regulation of action potential firing in dentate gyrus granule cells and down-regulates their intrinsic excitability. In astrocytes, the heterodimer formed by KCNK1 and KCNK2 is required for rapid glutamate release in response to activation of G-protein coupled receptors, such as F2R and CNR1. Required for normal ion and water transport in the kidney. Contributes to the regulation of the resting membrane potential of pancreatic beta cells. The low channel activity of homodimeric KCNK1 may be due to sumoylation. The low channel activity may be due to rapid internalization from the cell membrane and retention in recycling endosomes. Permeable to monovalent cations with ion selectivity for K(+) &gt; Rb(+) &gt;&gt; NH4(+) &gt;&gt; Cs(+) = Na(+) = Li(+). This chain is Potassium channel subfamily K member 1, found in Pongo abelii (Sumatran orangutan).